A 385-amino-acid chain; its full sequence is Succinate--CoA ligase [ADP-forming] subunit beta (385 aa).

Residues 9 to 241 (KELLRDFGIN…IDEEEPSELE (233 aa)) form the ATP-grasp domain. Residues Lys-46, 53 to 55 (GRG), Glu-99, Thr-102, and Glu-107 each bind ATP. 2 residues coordinate Mg(2+): Asn-196 and Asp-210. Residues Asn-261 and 318 to 320 (GIV) each bind substrate.

The protein belongs to the succinate/malate CoA ligase beta subunit family. In terms of assembly, heterotetramer of two alpha and two beta subunits. Mg(2+) is required as a cofactor.

It catalyses the reaction succinate + ATP + CoA = succinyl-CoA + ADP + phosphate. It carries out the reaction GTP + succinate + CoA = succinyl-CoA + GDP + phosphate. It participates in carbohydrate metabolism; tricarboxylic acid cycle; succinate from succinyl-CoA (ligase route): step 1/1. In terms of biological role, succinyl-CoA synthetase functions in the citric acid cycle (TCA), coupling the hydrolysis of succinyl-CoA to the synthesis of either ATP or GTP and thus represents the only step of substrate-level phosphorylation in the TCA. The beta subunit provides nucleotide specificity of the enzyme and binds the substrate succinate, while the binding sites for coenzyme A and phosphate are found in the alpha subunit. The sequence is that of Succinate--CoA ligase [ADP-forming] subunit beta from Campylobacter fetus subsp. fetus (strain 82-40).